Here is a 113-residue protein sequence, read N- to C-terminus: U11-theraphotoxin-Hhn1a (113 aa).

Residues 1-21 form the signal peptide; the sequence is MNTVRVTFLLVFVLAVSLGQA. Residues 22–74 constitute a propeptide that is removed on maturation; the sequence is DKDENRMEMQEKTEQGKSYLDFAENLLLQKLEELEAKLLEEDSEESRNSRQKR. Positions 61–83 are disordered; it reads EEDSEESRNSRQKRCIGEGVPCD. Disulfide bonds link Cys-75/Cys-90, Cys-82/Cys-95, and Cys-89/Cys-110.

Belongs to the neurotoxin 14 (magi-1) family. 01 (HNTX-16) subfamily. As to expression, expressed by the venom gland.

It localises to the secreted. In terms of biological role, probable ion channel inhibitor. The polypeptide is U11-theraphotoxin-Hhn1a (Cyriopagopus hainanus (Chinese bird spider)).